We begin with the raw amino-acid sequence, 56 residues long: Small ribosomal subunit protein uS14 (56 aa).

Residues cysteine 21, cysteine 24, cysteine 39, and cysteine 42 each contribute to the Zn(2+) site.

This sequence belongs to the universal ribosomal protein uS14 family. Component of the 40S small ribosomal subunit. Zn(2+) serves as cofactor.

Its subcellular location is the cytoplasm. It localises to the cytosol. It is found in the rough endoplasmic reticulum. The sequence is that of Small ribosomal subunit protein uS14 (RpS29) from Plutella xylostella (Diamondback moth).